We begin with the raw amino-acid sequence, 374 residues long: tRNA-specific 2-thiouridylase MnmA (374 aa).

Residues 13 to 20 (GMSGGVDS) and methionine 39 contribute to the ATP site. Residues 99–101 (NPD) form an interaction with target base in tRNA region. The active-site Nucleophile is cysteine 104. Cysteine 104 and cysteine 201 are disulfide-bonded. Glycine 128 is a binding site for ATP. An interaction with tRNA region spans residues 151–153 (KDQ). Cysteine 201 (cysteine persulfide intermediate) is an active-site residue. The tract at residues 313–314 (RY) is interaction with tRNA.

This sequence belongs to the MnmA/TRMU family.

Its subcellular location is the cytoplasm. The enzyme catalyses S-sulfanyl-L-cysteinyl-[protein] + uridine(34) in tRNA + AH2 + ATP = 2-thiouridine(34) in tRNA + L-cysteinyl-[protein] + A + AMP + diphosphate + H(+). In terms of biological role, catalyzes the 2-thiolation of uridine at the wobble position (U34) of tRNA, leading to the formation of s(2)U34. The polypeptide is tRNA-specific 2-thiouridylase MnmA (Streptococcus equi subsp. zooepidemicus (strain MGCS10565)).